The sequence spans 363 residues: 3-dehydroquinate synthase (363 aa).

Residues 70–75 (SGETSK), 104–108 (GVIGD), 128–129 (TT), lysine 141, lysine 150, and 168–171 (TLDT) each bind NAD(+). Zn(2+)-binding residues include glutamate 183, histidine 245, and histidine 262.

Belongs to the sugar phosphate cyclases superfamily. Dehydroquinate synthase family. Co(2+) serves as cofactor. Requires Zn(2+) as cofactor. It depends on NAD(+) as a cofactor.

It is found in the cytoplasm. It carries out the reaction 7-phospho-2-dehydro-3-deoxy-D-arabino-heptonate = 3-dehydroquinate + phosphate. Its pathway is metabolic intermediate biosynthesis; chorismate biosynthesis; chorismate from D-erythrose 4-phosphate and phosphoenolpyruvate: step 2/7. In terms of biological role, catalyzes the conversion of 3-deoxy-D-arabino-heptulosonate 7-phosphate (DAHP) to dehydroquinate (DHQ). The sequence is that of 3-dehydroquinate synthase from Alkaliphilus oremlandii (strain OhILAs) (Clostridium oremlandii (strain OhILAs)).